A 389-amino-acid chain; its full sequence is Lipid-A-disaccharide synthase (389 aa).

It belongs to the LpxB family.

It catalyses the reaction a lipid X + a UDP-2-N,3-O-bis[(3R)-3-hydroxyacyl]-alpha-D-glucosamine = a lipid A disaccharide + UDP + H(+). It functions in the pathway bacterial outer membrane biogenesis; LPS lipid A biosynthesis. Its function is as follows. Condensation of UDP-2,3-diacylglucosamine and 2,3-diacylglucosamine-1-phosphate to form lipid A disaccharide, a precursor of lipid A, a phosphorylated glycolipid that anchors the lipopolysaccharide to the outer membrane of the cell. This Paraburkholderia phymatum (strain DSM 17167 / CIP 108236 / LMG 21445 / STM815) (Burkholderia phymatum) protein is Lipid-A-disaccharide synthase.